The primary structure comprises 793 residues: E3 UFM1-protein ligase 1 (793 aa).

The residue at position 2 (A2) is an N-acetylalanine. The tract at residues 2 to 200 is mediates interaction with DDRGK1; it reads ADAWEEIRRL…RGLFSAITRP (199 aa). Residues 2–212 are required for E3 UFM1-protein ligase activity; that stretch reads ADAWEEIRRL…VNSLVSKYGF (211 aa). Residues 121-250 are involved in CDK5RAP3-binding; the sequence is DQLSEEVNDK…KAVFVPDIYS (130 aa). A mediates interaction with TRIP4 region spans residues 200-400; the sequence is PTPVNSLVSK…NPVHLITEED (201 aa). The tract at residues 410 to 473 is disordered; sequence VNTSKKDKKD…SSHGGKKKPD (64 aa). R433 is modified (omega-N-methylarginine). Phosphoserine occurs at positions 458 and 462. Residues 490 to 683 are mediates interaction with CDK5RAP3; it reads IQDAPEEFIS…QLKVTEDPAL (194 aa). Position 535 is a phosphothreonine (T535). Residues 742–765 are disordered; that stretch reads NKKTGQGEDPSSDELDKEQHDVTN. S752 and S753 each carry phosphoserine.

The protein belongs to the UFL1 family. In terms of assembly, catalytic component of the UFM1 ribosome E3 ligase (UREL) complex, composed of UFL1, DDRGK1 and CDK5RAP3. Interacts with E2-like enzyme UFC1. Interacts with RELA. Interacts with NBN; promoting recruitment to double-strand breaks following DNA damage. Interacts (when phosphorylated) with YWHAG/14-3-3-gamma; sequestering UFL1 and preventing its association with PDCD1/PD-1 substrate. Ubiquitinated, leading to its degradation by the proteasome. Interaction with CDK5RAP3 protects both proteins against ubiquitination and degradation via the proteasome. In terms of processing, phosphorylated at Ser-462 by ATM, enhancing protein ligase activity and promoting ATM activation in a positive feedback loop. Phosphorylation at Thr-535 by AMPK promotes its interaction with YWHAG/14-3-3-gamma, thereby preventing UFL1 association with PDCD1/PD-1 substrate. In terms of tissue distribution, ubiquitously expressed with higher expression in pancreatic islets and other secretory tissues. In the embryonic brain at 17 dpc, detected in Sox2-positive neural stem cells and in Slc1a3/GLAST-positive radial glia. In perinatal brain, highly expressed in Slc1a3-positive Bergmann glia of the cerebellum. Continues to be expressed in Bergmann glia of adult brain at 16 weeks. Expressed in adult heart. Highly expressed in the intestinal exocrine cells.

The protein resides in the endoplasmic reticulum membrane. It localises to the cytoplasm. The protein localises to the cytosol. Its subcellular location is the nucleus. It is found in the chromosome. E3 protein ligase that mediates ufmylation, the covalent attachment of the ubiquitin-like modifier UFM1 to lysine residues on target proteins, and which plays a key role in various processes, such as ribosome recycling, response to DNA damage, interferon response or reticulophagy (also called ER-phagy). Catalyzes ufmylation of many protein, such as CD274/PD-L1, CDK5RAP3, CYB5R3, DDRGK1, EIF6, histone H4, MRE11, P4HB, PDCD1/PD-1, TRIP4, RPN1, RPS20/uS10, RPL10/uL16, RPL26/uL24, SYVN1/HRD1 and TP53/p53. As part of the UREL complex, plays a key role in ribosome recycling by catalyzing mono-ufmylation of RPL26/uL24 subunit of the 60S ribosome. Ufmylation of RPL26/uL24 occurs on free 60S ribosomes following ribosome dissociation: it weakens the junction between post-termination 60S subunits and SEC61 translocons, promoting release and recycling of the large ribosomal subunit from the endoplasmic reticulum membrane. Ufmylation of RPL26/uL24 and subsequent 60S ribosome recycling either take place after normal termination of translation or after ribosome stalling during cotranslational translocation at the endoplasmic reticulum. Involved in reticulophagy in response to endoplasmic reticulum stress by mediating ufmylation of proteins such as CYB5R3 and RPN1, thereby promoting lysosomal degradation of ufmylated proteins. Ufmylation in response to endoplasmic reticulum stress is essential for processes such as hematopoiesis, blood vessel morphogenesis or inflammatory response. Mediates ufmylation of DDRGK1 and CDK5RAP3; the role of these modifications is however unclear: as both DDRGK1 and CDK5RAP3 act as substrate adapters for ufmylation, it is uncertain whether ufmylation of these proteins is a collateral effect or is required for ufmylation. Acts as a negative regulator of T-cell activation by mediating ufmylation and stabilization of PDCD1/PD-1. Also involved in the response to DNA damage: recruited to double-strand break sites following DNA damage and mediates monoufmylation of histone H4 and ufmylation of MRE11. Mediates ufmylation of TP53/p53, promoting its stability. Catalyzes ufmylation of TRIP4, thereby playing a role in nuclear receptor-mediated transcription. Required for hematopoietic stem cell function and hematopoiesis. The protein is E3 UFM1-protein ligase 1 of Mus musculus (Mouse).